Here is a 231-residue protein sequence, read N- to C-terminus: 7-cyano-7-deazaguanine synthase (231 aa).

8 to 18 (FSGGQDSTTCL) is an ATP binding site. Residues Cys-188, Cys-197, Cys-200, and Cys-203 each coordinate Zn(2+).

The protein belongs to the QueC family. Requires Zn(2+) as cofactor.

The catalysed reaction is 7-carboxy-7-deazaguanine + NH4(+) + ATP = 7-cyano-7-deazaguanine + ADP + phosphate + H2O + H(+). Its pathway is purine metabolism; 7-cyano-7-deazaguanine biosynthesis. Its function is as follows. Catalyzes the ATP-dependent conversion of 7-carboxy-7-deazaguanine (CDG) to 7-cyano-7-deazaguanine (preQ(0)). This Salmonella choleraesuis (strain SC-B67) protein is 7-cyano-7-deazaguanine synthase.